Consider the following 295-residue polypeptide: UTP--glucose-1-phosphate uridylyltransferase (295 aa).

This sequence belongs to the UDPGP type 2 family.

It carries out the reaction alpha-D-glucose 1-phosphate + UTP + H(+) = UDP-alpha-D-glucose + diphosphate. May play a role in stationary phase survival. This is UTP--glucose-1-phosphate uridylyltransferase (galU) from Haemophilus influenzae (strain ATCC 51907 / DSM 11121 / KW20 / Rd).